Here is an 83-residue protein sequence, read N- to C-terminus: Large ribosomal subunit protein bL31B (83 aa).

It belongs to the bacterial ribosomal protein bL31 family. Type B subfamily. Part of the 50S ribosomal subunit.

The sequence is that of Large ribosomal subunit protein bL31B from Levilactobacillus brevis (strain ATCC 367 / BCRC 12310 / CIP 105137 / JCM 1170 / LMG 11437 / NCIMB 947 / NCTC 947) (Lactobacillus brevis).